The following is a 388-amino-acid chain: Chorismate synthase (388 aa).

2 residues coordinate NADP(+): arginine 39 and arginine 45. Residues 130–132 (RSS), 251–252 (NA), glycine 296, 311–315 (KPIPT), and arginine 337 contribute to the FMN site.

Belongs to the chorismate synthase family. In terms of assembly, homotetramer. FMNH2 serves as cofactor.

It carries out the reaction 5-O-(1-carboxyvinyl)-3-phosphoshikimate = chorismate + phosphate. It functions in the pathway metabolic intermediate biosynthesis; chorismate biosynthesis; chorismate from D-erythrose 4-phosphate and phosphoenolpyruvate: step 7/7. Its function is as follows. Catalyzes the anti-1,4-elimination of the C-3 phosphate and the C-6 proR hydrogen from 5-enolpyruvylshikimate-3-phosphate (EPSP) to yield chorismate, which is the branch point compound that serves as the starting substrate for the three terminal pathways of aromatic amino acid biosynthesis. This reaction introduces a second double bond into the aromatic ring system. The sequence is that of Chorismate synthase from Streptococcus pneumoniae serotype 19F (strain G54).